Consider the following 113-residue polypeptide: Seminal vesicle secretory protein 4 (113 aa).

The first 21 residues, 1 to 21 (MNSTSLFLFSLLLLLVTGAIG), serve as a signal peptide directing secretion. A disordered region spans residues 31-113 (SEETVRESFS…KSRFSQDALE (83 aa)). Low complexity-rich tracts occupy residues 38–50 (SFSMGSRGHMSRS) and 83–98 (IISSSSDGSNMEGESS).

This sequence belongs to the SVP2/SVP5/SVP6 family. Testis.

It localises to the secreted. It is found in the extracellular space. The chain is Seminal vesicle secretory protein 4 (Svs4) from Mus musculus (Mouse).